Here is a 141-residue protein sequence, read N- to C-terminus: Nucleoside diphosphate kinase (141 aa).

Residues lysine 11, phenylalanine 59, arginine 87, threonine 93, arginine 104, and asparagine 114 each coordinate ATP. Histidine 117 serves as the catalytic Pros-phosphohistidine intermediate.

The protein belongs to the NDK family. As to quaternary structure, homotetramer. Requires Mg(2+) as cofactor.

The protein localises to the cytoplasm. The catalysed reaction is a 2'-deoxyribonucleoside 5'-diphosphate + ATP = a 2'-deoxyribonucleoside 5'-triphosphate + ADP. The enzyme catalyses a ribonucleoside 5'-diphosphate + ATP = a ribonucleoside 5'-triphosphate + ADP. Its function is as follows. Major role in the synthesis of nucleoside triphosphates other than ATP. The ATP gamma phosphate is transferred to the NDP beta phosphate via a ping-pong mechanism, using a phosphorylated active-site intermediate. The polypeptide is Nucleoside diphosphate kinase (Cupriavidus necator (strain ATCC 17699 / DSM 428 / KCTC 22496 / NCIMB 10442 / H16 / Stanier 337) (Ralstonia eutropha)).